The following is a 423-amino-acid chain: COUP transcription factor 1 (423 aa).

The disordered stretch occupies residues 1-81 (MAMVVSSWRD…QGPPGSGQSQ (81 aa)). A compositionally biased stretch (low complexity) spans 39-67 (EQQQQAGSGAPHTPQTPGQPGAPATPGTA). The segment at residues 83–158 (HIECVVCGDK…VGMRREAVQR (76 aa)) is a DNA-binding region (nuclear receptor). 2 NR C4-type zinc fingers span residues 86 to 106 (CVVC…CEGC) and 122 to 146 (CRAN…LKKC). An NR LBD domain is found at 184–410 (YLSGYISLLL…TLIRDMLLSG (227 aa)).

Belongs to the nuclear hormone receptor family. NR2 subfamily. In terms of assembly, binds DNA as dimer; homodimer and probable heterodimer with NR2F6. Interacts with GTF2B; this interaction is direct. Interacts with COPS2.

It localises to the nucleus. In terms of biological role, coup (chicken ovalbumin upstream promoter) transcription factor binds to the ovalbumin promoter and, in conjunction with another protein (S300-II) stimulates initiation of transcription. Binds to both direct repeats and palindromes of the 5'-AGGTCA-3' motif. Represses transcriptional activity of LHCG. This is COUP transcription factor 1 (NR2F1) from Homo sapiens (Human).